A 349-amino-acid polypeptide reads, in one-letter code: Core protein VP7 (349 aa).

A glycan (N-linked (GlcNAc...) asparagine; by host) is linked at Asn287.

It belongs to the orbivirus VP7 family. In terms of assembly, homotrimer that assemble in a complex of 260 capsomers on an inner scaffold composed of VP3.

It is found in the virion. Functionally, the VP7 protein is one of the five proteins (with VP1, VP3, VP4, and VP6) which form the inner capsid of the virus. The protein is Core protein VP7 (Segment-7) of Antilocapra americana (Pronghorn).